A 1868-amino-acid polypeptide reads, in one-letter code: Dedicator of cytokinesis protein 5 (1868 aa).

One can recognise an SH3 domain in the interval 8-69 (KRQKYGVAIY…PETYIHLKEA (62 aa)). Phosphoserine is present on Ser-365. Residues 443-627 (RNDIYVTLIH…DSFQIATLIC (185 aa)) form the C2 DOCK-type domain. An N6-acetyllysine modification is found at Lys-818. The region spanning 1231 to 1642 (YKDKKREDIY…VEKLYGVITL (412 aa)) is the DOCKER domain. Over residues 1681–1692 (STSSNSSDNASS) the composition is skewed to low complexity. Disordered stretches follow at residues 1681–1730 (STSS…RISK) and 1742–1868 (QVIA…PGSQ). Residues 1704 to 1728 (LFERRASSGARVEDLPPKEDSENRI) show a composition bias toward basic and acidic residues. 5 positions are modified to phosphoserine: Ser-1755, Ser-1765, Ser-1771, Ser-1784, and Ser-1788. Phosphothreonine is present on Thr-1793. Positions 1796-1810 (ATRTLSSPSLQTDGL) are enriched in polar residues. 2 positions are modified to phosphoserine: Ser-1832 and Ser-1867.

It belongs to the DOCK family. In terms of assembly, interacts with CRK and CRKL. Interacts (via N-terminus) with tensin TNS3 (via N-terminus); the interaction increases DOCK5 guanine nucleotide exchange activity towards Rac. Interacts with ELMO1. Highly expressed in lens, where it predominantly localizes to anterior epithelial cells, and is weakly expressed in lens fiber (at protein level). Expressed in brain, eye, lung, spleen and kidney, but not in thymus or peripheral blood leukocytes.

The protein localises to the cytoplasm. The protein resides in the cell membrane. It localises to the cell projection. It is found in the podosome. Functionally, guanine nucleotide exchange factor (GEF) for Rho and Rac. GEF proteins activate small GTPases by exchanging bound GDP for free GTP. Along with DOCK1, mediates CRK/CRKL regulation of epithelial and endothelial cell spreading and migration on type IV collagen. The polypeptide is Dedicator of cytokinesis protein 5 (Mus musculus (Mouse)).